We begin with the raw amino-acid sequence, 65 residues long: Antimicrobial peptide THP1 (65 aa).

Residues 1-25 (MRIVYLLFPFILLLAQGAAGSSLAL) form the signal peptide. Intrachain disulfides connect Cys31/Cys53, Cys38/Cys59, and Cys43/Cys60. Residues 61-65 (KTLLG) constitute a propeptide that is removed on maturation.

This sequence belongs to the beta-defensin family.

The protein localises to the secreted. Functionally, bactericidal activity; inhibits S.aureus and E.coli. This is Antimicrobial peptide THP1 from Meleagris gallopavo (Wild turkey).